Here is a 638-residue protein sequence, read N- to C-terminus: Epithelial sodium channel subunit beta (638 aa).

The Cytoplasmic portion of the chain corresponds to 1-50 (MPVKKYLLKCLHRLQKGPGYTYKELLVWYCNNTNTHGPKRIICEGPKKKA). Residues 51-71 (MWFLLTLLFACLVCWQWGVFI) traverse the membrane as a helical segment. Over 72–530 (QTYLSWEVSV…GGQFGFWMGG (459 aa)) the chain is Extracellular. 9 disulfides stabilise this stretch: cysteine 98/cysteine 270, cysteine 182/cysteine 187, cysteine 194/cysteine 201, cysteine 247/cysteine 254, cysteine 359/cysteine 446, cysteine 384/cysteine 442, cysteine 388/cysteine 438, cysteine 397/cysteine 424, and cysteine 399/cysteine 413. Asparagine 135 and asparagine 141 each carry an N-linked (GlcNAc...) asparagine glycan. N-linked (GlcNAc...) asparagine glycosylation is present at asparagine 205. A helical transmembrane segment spans residues 531–551 (SVLCLIEFGEIIIDFIWITII). Residues 552 to 638 (KLVASCKGLR…MESDSEVEAI (87 aa)) lie on the Cytoplasmic side of the membrane. The segment at 594–620 (SCRPHGEVYPDQQTLPIPGTPPPNYDS) is disordered. A PY motif; recruits WW domain-containing proteins and is thereby required for ubiquitination and inhibition of the channel by NEDD4 and NEDD4L motif is present at residues 614–618 (PPPNY). Residues serine 631 and serine 633 each carry the phosphoserine modification.

This sequence belongs to the amiloride-sensitive sodium channel (TC 1.A.6) family. SCNN1B subfamily. As to quaternary structure, component of the heterotrimeric epithelial sodium channel (ENaC) composed of an alpha/SCNN1A, a beta/SCNN1B and a gamma/SCNN1G subunit. Interacts with WWP1 (via WW domains). Interacts with WWP2 (via WW domains); inhibits the channel. Interacts with the full-length immature form of PCSK9 (pro-PCSK9). Interacts (N-glycosylated) with BPIFA1; the interaction is direct and inhibits the proteolytic processing of SCNN1A and SCNN1G and the activation of ENaC. Ubiquitinated. Can be ubiquitinated at multiple sites and undergo monoubiquitination and polyubiquitination. Ubiquitination by NEDD4 or NEDD4L inhibits the ENaC channel through endocytosis, intracellular retention and degradation of its individual subunits. However, some studies could not confirm the ubiquitination of this subunit of the ENaC. In terms of processing, N-glycosylated. N-glycosylation is required for interaction with BPIFA1. Post-translationally, phosphorylated on serine and threonine residues. Aldosterone and insulin increase the basal level of phosphorylation. As to expression, lung and kidney.

It is found in the apical cell membrane. The protein resides in the cytoplasmic vesicle membrane. It catalyses the reaction Na(+)(in) = Na(+)(out). Its activity is regulated as follows. Originally identified and characterized by its inhibition by the diuretic drug amiloride. Functionally, this is one of the three pore-forming subunits of the heterotrimeric epithelial sodium channel (ENaC), a critical regulator of sodium balance and fluid homeostasis. ENaC operates in epithelial tissues, where it mediates the electrodiffusion of sodium ions from extracellular fluid through the apical membrane of cells, with water following osmotically. It plays a key role in maintaining sodium homeostasis through electrogenic sodium reabsorption in the kidneys. This subunit is not essential for ENaC function in airway surface liquid homeostasis and proper mucus clearance. The chain is Epithelial sodium channel subunit beta from Mus musculus (Mouse).